Reading from the N-terminus, the 67-residue chain is ATP synthase F(0) complex subunit 8 (67 aa).

The chain crosses the membrane as a helical span at residues 8-24 (TWFITITSMIMTLFILF). Lysine 54 bears the N6-acetyllysine; alternate mark. Lysine 54 carries the N6-succinyllysine; alternate modification. Lysine 57 bears the N6-acetyllysine mark.

Belongs to the ATPase protein 8 family. Component of the ATP synthase complex composed at least of ATP5F1A/subunit alpha, ATP5F1B/subunit beta, ATP5MC1/subunit c (homooctomer), MT-ATP6/subunit a, MT-ATP8/subunit 8, ATP5ME/subunit e, ATP5MF/subunit f, ATP5MG/subunit g, ATP5MK/subunit k, ATP5MJ/subunit j, ATP5F1C/subunit gamma, ATP5F1D/subunit delta, ATP5F1E/subunit epsilon, ATP5PF/subunit F6, ATP5PB/subunit b, ATP5PD/subunit d, ATP5PO/subunit OSCP. ATP synthase complex consists of a soluble F(1) head domain (subunits alpha(3) and beta(3)) - the catalytic core - and a membrane F(0) domain - the membrane proton channel (subunits c, a, 8, e, f, g, k and j). These two domains are linked by a central stalk (subunits gamma, delta, and epsilon) rotating inside the F1 region and a stationary peripheral stalk (subunits F6, b, d, and OSCP). Interacts with PRICKLE3.

The protein localises to the mitochondrion membrane. Its function is as follows. Subunit 8, of the mitochondrial membrane ATP synthase complex (F(1)F(0) ATP synthase or Complex V) that produces ATP from ADP in the presence of a proton gradient across the membrane which is generated by electron transport complexes of the respiratory chain. ATP synthase complex consist of a soluble F(1) head domain - the catalytic core - and a membrane F(1) domain - the membrane proton channel. These two domains are linked by a central stalk rotating inside the F(1) region and a stationary peripheral stalk. During catalysis, ATP synthesis in the catalytic domain of F(1) is coupled via a rotary mechanism of the central stalk subunits to proton translocation. In vivo, can only synthesize ATP although its ATP hydrolase activity can be activated artificially in vitro. Part of the complex F(0) domain. This is ATP synthase F(0) complex subunit 8 from Sus scrofa (Pig).